The chain runs to 363 residues: Zinc phosphodiesterase ELAC protein 1 (363 aa).

Zn(2+)-binding residues include histidine 62, histidine 64, aspartate 66, histidine 67, histidine 182, aspartate 253, and histidine 313. Aspartate 66 (proton acceptor) is an active-site residue.

This sequence belongs to the RNase Z family. As to quaternary structure, homodimer. Requires Zn(2+) as cofactor. As to expression, widely expressed. Expressed in heart, brain, placenta, lung, liver, skeletal muscle, kidney and pancreas.

Its subcellular location is the cytoplasm. It localises to the cytosol. The protein resides in the nucleus. It carries out the reaction Endonucleolytic cleavage of RNA, removing extra 3' nucleotides from tRNA precursor, generating 3' termini of tRNAs. A 3'-hydroxy group is left at the tRNA terminus and a 5'-phosphoryl group is left at the trailer molecule.. Its function is as follows. Zinc phosphodiesterase, which displays some tRNA 3'-processing endonuclease activity. Specifically involved in tRNA repair: acts downstream of the ribosome-associated quality control (RQC) pathway by removing a 2',3'-cyclic phosphate from tRNAs following cleavage by ANKZF1. tRNAs are then processed by TRNT1. The chain is Zinc phosphodiesterase ELAC protein 1 from Homo sapiens (Human).